The chain runs to 67 residues: ORF2p protein (67 aa).

The tract at residues 13-18 (WIGHPV) is important for viral replication in intestinal cells. A transmembrane span lies at residues 22–38 (AIIYPFVGFIPLSLKEV).

It is found in the host cytoplasmic vesicle membrane. Functionally, facilitates virus release from intestinal cells in vitro, possibly through the host autophagic pathway. The polypeptide is ORF2p protein (Homo sapiens (Human)).